The sequence spans 149 residues: Large ribosomal subunit protein bL9 (149 aa).

The protein belongs to the bacterial ribosomal protein bL9 family.

Its function is as follows. Binds to the 23S rRNA. The protein is Large ribosomal subunit protein bL9 of Bacillus pumilus (strain SAFR-032).